The primary structure comprises 147 residues: Nucleoside diphosphate kinase (147 aa).

ATP contacts are provided by Lys-9, Phe-57, Arg-85, Thr-91, Arg-102, and Asn-112. The active-site Pros-phosphohistidine intermediate is the His-115.

The protein belongs to the NDK family. The cofactor is Mg(2+).

It is found in the cytoplasm. It catalyses the reaction a 2'-deoxyribonucleoside 5'-diphosphate + ATP = a 2'-deoxyribonucleoside 5'-triphosphate + ADP. The enzyme catalyses a ribonucleoside 5'-diphosphate + ATP = a ribonucleoside 5'-triphosphate + ADP. In terms of biological role, major role in the synthesis of nucleoside triphosphates other than ATP. The ATP gamma phosphate is transferred to the NDP beta phosphate via a ping-pong mechanism, using a phosphorylated active-site intermediate. This is Nucleoside diphosphate kinase from Ignicoccus hospitalis (strain KIN4/I / DSM 18386 / JCM 14125).